The chain runs to 109 residues: UPF0154 protein UPA3_0273 (109 aa).

A helical transmembrane segment spans residues 42 to 62; the sequence is VGLGIGIVLFLIAGLIIGYFI.

It belongs to the UPF0154 family.

The protein localises to the cell membrane. This chain is UPF0154 protein UPA3_0273, found in Ureaplasma parvum serovar 3 (strain ATCC 27815 / 27 / NCTC 11736).